The sequence spans 438 residues: Serine--tRNA ligase (438 aa).

245-247 is an L-serine binding site; it reads TAE. Residue 276–278 coordinates ATP; the sequence is RSE. Residue glutamate 299 participates in L-serine binding. 363–366 contributes to the ATP binding site; the sequence is EISS. L-serine is bound at residue serine 398.

This sequence belongs to the class-II aminoacyl-tRNA synthetase family. Type-1 seryl-tRNA synthetase subfamily. Homodimer. The tRNA molecule binds across the dimer.

Its subcellular location is the cytoplasm. The catalysed reaction is tRNA(Ser) + L-serine + ATP = L-seryl-tRNA(Ser) + AMP + diphosphate + H(+). The enzyme catalyses tRNA(Sec) + L-serine + ATP = L-seryl-tRNA(Sec) + AMP + diphosphate + H(+). Its pathway is aminoacyl-tRNA biosynthesis; selenocysteinyl-tRNA(Sec) biosynthesis; L-seryl-tRNA(Sec) from L-serine and tRNA(Sec): step 1/1. Functionally, catalyzes the attachment of serine to tRNA(Ser). Is also able to aminoacylate tRNA(Sec) with serine, to form the misacylated tRNA L-seryl-tRNA(Sec), which will be further converted into selenocysteinyl-tRNA(Sec). This is Serine--tRNA ligase from Delftia acidovorans (strain DSM 14801 / SPH-1).